Reading from the N-terminus, the 398-residue chain is Tyrosine--tRNA ligase (398 aa).

A 'HIGH' region motif is present at residues 42–51; it reads PTAPDLHLGH. The 'KMSKS' region signature appears at 226–230; sequence KMSKS. K229 lines the ATP pocket. An S4 RNA-binding domain is found at 341–397; that stretch reads AFLEAAGLVKSRGEAKRLIKEGALSVDGVRCDDANSPLASGEYVIKLGKKRFLRLTV.

The protein belongs to the class-I aminoacyl-tRNA synthetase family. TyrS type 2 subfamily. Homodimer.

Its subcellular location is the cytoplasm. It carries out the reaction tRNA(Tyr) + L-tyrosine + ATP = L-tyrosyl-tRNA(Tyr) + AMP + diphosphate + H(+). Functionally, catalyzes the attachment of tyrosine to tRNA(Tyr) in a two-step reaction: tyrosine is first activated by ATP to form Tyr-AMP and then transferred to the acceptor end of tRNA(Tyr). This is Tyrosine--tRNA ligase from Nitratidesulfovibrio vulgaris (strain ATCC 29579 / DSM 644 / CCUG 34227 / NCIMB 8303 / VKM B-1760 / Hildenborough) (Desulfovibrio vulgaris).